The sequence spans 876 residues: Extended synaptotagmin-2-B (876 aa).

Residues Met-1–Pro-21 form a disordered region. Over Met-1–Gly-35 the chain is Cytoplasmic. The helical transmembrane segment at Met-36–Phe-56 threads the bilayer. At Pro-57–Tyr-59 the chain is on the lumenal side. The helical transmembrane segment at Val-60–Trp-80 threads the bilayer. Topologically, residues Trp-81–Ser-876 are cytoplasmic. The 180-residue stretch at Asp-123–Val-302 folds into the SMP-LTD domain. 2 consecutive C2 domains span residues Leu-301 to Phe-421 and Asn-446 to Asn-592. Residues Lys-332, Asp-333, Asp-345, Asp-392, Glu-393, Asp-394, Asp-396, Asp-398, and Asp-399 each coordinate Ca(2+). The interval Val-614–Asp-714 is disordered. Over residues Pro-636–Pro-656 the composition is skewed to pro residues. Positions Ser-686–Ser-698 are enriched in low complexity. One can recognise a C2 3 domain in the interval Pro-741–Phe-863. Residues Lys-788–Lys-795 form a required for phosphatidylinositol 4,5-bisphosphate-dependent location at the cell membrane region.

It belongs to the extended synaptotagmin family. As to quaternary structure, interacts with fgfr1 that has been activated by fgf1 binding. Interacts (via C2 domains) with the AP-2 complex (via an alpha subunit). Identified in a complex with the AP-2 complex and fgfr1.

It localises to the cell membrane. The protein localises to the endoplasmic reticulum membrane. Tethers the endoplasmic reticulum to the cell membrane and promotes the formation of appositions between the endoplasmic reticulum and the cell membrane. Binds glycerophospholipids in a barrel-like domain and may play a role in cellular lipid transport. Plays a role in the rapid internalization of fgfr1 that has been activated by fgf1 binding; this occurs most likely via the AP-2 complex. Required for normal fgf signaling and the activation of downstream signaling cascades via its role in the internalization of activated fgfr1. Required for normal embryonic development via its role in fgf signaling and the downstream regulation of t/xBRA expression. The polypeptide is Extended synaptotagmin-2-B (esyt2-b) (Xenopus laevis (African clawed frog)).